The primary structure comprises 207 residues: Ribosomal RNA large subunit methyltransferase E (207 aa).

The S-adenosyl-L-methionine site is built by glycine 60, tryptophan 62, aspartate 80, aspartate 96, and aspartate 121. Lysine 161 serves as the catalytic Proton acceptor.

It belongs to the class I-like SAM-binding methyltransferase superfamily. RNA methyltransferase RlmE family.

Its subcellular location is the cytoplasm. It catalyses the reaction uridine(2552) in 23S rRNA + S-adenosyl-L-methionine = 2'-O-methyluridine(2552) in 23S rRNA + S-adenosyl-L-homocysteine + H(+). In terms of biological role, specifically methylates the uridine in position 2552 of 23S rRNA at the 2'-O position of the ribose in the fully assembled 50S ribosomal subunit. This is Ribosomal RNA large subunit methyltransferase E from Marinobacter nauticus (strain ATCC 700491 / DSM 11845 / VT8) (Marinobacter aquaeolei).